The following is a 738-amino-acid chain: Envelope glycoprotein gp160 (738 aa).

The N-terminal stretch at methionine 1–cysteine 21 is a signal peptide. At threonine 22–tyrosine 670 the chain is on the extracellular side. Asparagine 36 is a glycosylation site (N-linked (GlcNAc...) asparagine; by host). An intrachain disulfide couples cysteine 43 to cysteine 56. 23 N-linked (GlcNAc...) asparagine; by host glycosylation sites follow: asparagine 69, asparagine 113, asparagine 117, asparagine 118, asparagine 132, asparagine 141, asparagine 169, asparagine 182, asparagine 197, asparagine 229, asparagine 232, asparagine 263, asparagine 269, asparagine 280, asparagine 291, asparagine 301, asparagine 356, asparagine 362, asparagine 389, asparagine 402, asparagine 439, asparagine 454, and asparagine 457. 5 cysteine pairs are disulfide-bonded: cysteine 100–cysteine 205, cysteine 107–cysteine 196, cysteine 112–cysteine 153, cysteine 218–cysteine 248, and cysteine 228–cysteine 240. Residues cysteine 112–asparagine 152 form a V1 region. The tract at residues cysteine 153–cysteine 196 is V2. Residues cysteine 296 to tryptophan 328 form a V3 region. Cysteines 296 and 329 form a disulfide. 2 cysteine pairs are disulfide-bonded: cysteine 381–cysteine 438 and cysteine 388–cysteine 411. A V4 region spans residues cysteine 388–cysteine 411. The segment at asparagine 454–phenylalanine 460 is V5. A fusion peptide region spans residues glycine 503–alanine 523. The segment at leucine 566 to glutamine 582 is immunosuppression. Residues asparagine 602, asparagine 611, and asparagine 627 are each glycosylated (N-linked (GlcNAc...) asparagine; by host). Residues glutamine 615–glutamine 636 are a coiled coil. The MPER; binding to GalCer stretch occupies residues lysine 648–glutamine 669. Residues glycine 671–leucine 691 form a helical membrane-spanning segment. Residues serine 692–leucine 738 lie on the Cytoplasmic side of the membrane. A YXXV motif; contains endocytosis signal motif is present at residues tyrosine 698 to valine 701. A disordered region spans residues threonine 716–leucine 738. Residues glycine 725 to leucine 738 are compositionally biased toward acidic residues.

As to quaternary structure, the mature envelope protein (Env) consists of a homotrimer of non-covalently associated gp120-gp41 heterodimers. The resulting complex protrudes from the virus surface as a spike. There seems to be as few as 10 spikes on the average virion. Interacts with human CD4, CCR5 and CXCR4, to form a P4HB/PDI-CD4-CXCR4-gp120 complex. Gp120 also interacts with the C-type lectins CD209/DC-SIGN and CLEC4M/DC-SIGNR (collectively referred to as DC-SIGN(R)). Gp120 and gp41 interact with GalCer. In terms of assembly, the mature envelope protein (Env) consists of a homotrimer of non-covalently associated gp120-gp41 heterodimers. The resulting complex protrudes from the virus surface as a spike. There seems to be as few as 10 spikes on the average virion. Specific enzymatic cleavages in vivo yield mature proteins. Envelope glycoproteins are synthesized as an inactive precursor that is heavily N-glycosylated and processed likely by host cell furin in the Golgi to yield the mature SU and TM proteins. The cleavage site between SU and TM requires the minimal sequence [KR]-X-[KR]-R. In terms of processing, palmitoylation of the transmembrane protein and of Env polyprotein (prior to its proteolytic cleavage) is essential for their association with host cell membrane lipid rafts. Palmitoylation is therefore required for envelope trafficking to classical lipid rafts, but not for viral replication.

Its subcellular location is the virion membrane. It localises to the host cell membrane. The protein resides in the host endosome membrane. Its function is as follows. The surface protein gp120 (SU) attaches the virus to the host lymphoid cell by binding to the primary receptor CD4. This interaction induces a structural rearrangement creating a high affinity binding site for a chemokine coreceptor like CXCR4 and/or CCR5. This peculiar 2 stage receptor-interaction strategy allows gp120 to maintain the highly conserved coreceptor-binding site in a cryptic conformation, protected from neutralizing antibodies. Since CD4 also displays a binding site for the disulfide-isomerase P4HB/PDI, a P4HB/PDI-CD4-CXCR4-gp120 complex may form. In that complex, P4HB/PDI could reach and reduce gp120 disulfide bonds, causing major conformational changes in gp120. TXN, another PDI family member could also be involved in disulfide rearrangements in Env during fusion. These changes are transmitted to the transmembrane protein gp41 and are thought to activate its fusogenic potential by unmasking its fusion peptide. The surface protein gp120 is a ligand for CD209/DC-SIGN and CLEC4M/DC-SIGNR, which are respectively found on dendritic cells (DCs), and on endothelial cells of liver sinusoids and lymph node sinuses. These interactions allow capture of viral particles at mucosal surfaces by these cells and subsequent transmission to permissive cells. DCs are professional antigen presenting cells, critical for host immunity by inducing specific immune responses against a broad variety of pathogens. They act as sentinels in various tissues where they take up antigen, process it, and present it to T-cells following migration to lymphoid organs. HIV subverts the migration properties of dendritic cells to gain access to CD4+ T-cells in lymph nodes. Virus transmission to permissive T-cells occurs either in trans (without DCs infection, through viral capture and transmission), or in cis (following DCs productive infection, through the usual CD4-gp120 interaction), thereby inducing a robust infection. In trans infection, bound virions remain infectious over days and it is proposed that they are not degraded, but protected in non-lysosomal acidic organelles within the DCs close to the cell membrane thus contributing to the viral infectious potential during DCs' migration from the periphery to the lymphoid tissues. On arrival at lymphoid tissues, intact virions recycle back to DCs' cell surface allowing virus transmission to CD4+ T-cells. Virion capture also seems to lead to MHC-II-restricted viral antigen presentation, and probably to the activation of HIV-specific CD4+ cells. In terms of biological role, the transmembrane protein gp41 (TM) acts as a class I viral fusion protein. Under the current model, the protein has at least 3 conformational states: pre-fusion native state, pre-hairpin intermediate state, and post-fusion hairpin state. During fusion of viral and target intracellular membranes, the coiled coil regions (heptad repeats) assume a trimer-of-hairpins structure, positioning the fusion peptide in close proximity to the C-terminal region of the ectodomain. The formation of this structure appears to drive apposition and subsequent fusion of viral and target cell membranes. Complete fusion occurs in host cell endosomes and is dynamin-dependent, however some lipid transfer might occur at the plasma membrane. The virus undergoes clathrin-dependent internalization long before endosomal fusion, thus minimizing the surface exposure of conserved viral epitopes during fusion and reducing the efficacy of inhibitors targeting these epitopes. Membranes fusion leads to delivery of the nucleocapsid into the cytoplasm. Functionally, the envelope glycoprotein gp160 precursor down-modulates cell surface CD4 antigen by interacting with it in the endoplasmic reticulum and blocking its transport to the cell surface. Its function is as follows. The gp120-gp41 heterodimer seems to contribute to T-cell depletion during HIV-1 infection. The envelope glycoproteins expressed on the surface of infected cells induce apoptosis through an interaction with uninfected cells expressing the receptor (CD4) and the coreceptors CXCR4 or CCR5. This type of bystander killing may be obtained by at least three distinct mechanisms. First, the interaction between the 2 cells can induce cellular fusion followed by nuclear fusion within the syncytium. Syncytia are condemned to die from apoptosis. Second, the 2 interacting cells may not fuse entirely and simply exchange plasma membrane lipids, after a sort of hemifusion process, followed by rapid death. Third, it is possible that virus-infected cells, on the point of undergoing apoptosis, fuse with CD4-expressing cells, in which case apoptosis is rapidly transmitted from one cell to the other and thus occurs in a sort of contagious fashion. The gp120-gp41 heterodimer allows rapid transcytosis of the virus through CD4 negative cells such as simple epithelial monolayers of the intestinal, rectal and endocervical epithelial barriers. Both gp120 and gp41 specifically recognize glycosphingolipids galactosyl-ceramide (GalCer) or 3' sulfo-galactosyl-ceramide (GalS) present in the lipid rafts structures of epithelial cells. Binding to these alternative receptors allows the rapid transcytosis of the virus through the epithelial cells. This transcytotic vesicle-mediated transport of virions from the apical side to the basolateral side of the epithelial cells does not involve infection of the cells themselves. The protein is Envelope glycoprotein gp160 (env) of Human immunodeficiency virus type 2 subtype A (isolate Ghana-1) (HIV-2).